The primary structure comprises 369 residues: Peptide chain release factor 2 (369 aa).

At glutamine 249 the chain carries N5-methylglutamine.

It belongs to the prokaryotic/mitochondrial release factor family. Post-translationally, methylated by PrmC. Methylation increases the termination efficiency of RF2.

It localises to the cytoplasm. Functionally, peptide chain release factor 2 directs the termination of translation in response to the peptide chain termination codons UGA and UAA. The chain is Peptide chain release factor 2 from Thermosipho africanus (strain TCF52B).